The primary structure comprises 315 residues: Probable phosphate transport system permease protein PstC (315 aa).

A run of 6 helical transmembrane segments spans residues 18-38 (IITL…LGFY), 80-100 (IYTA…YAIF), 119-139 (IMAG…LVPL), 167-187 (CYLS…AAII), 227-247 (GLIL…LVIG), and 283-303 (VLYS…IIGI). Positions 76–302 (IWGSIYTATI…VIGLVVNIIG (227 aa)) constitute an ABC transmembrane type-1 domain.

Belongs to the binding-protein-dependent transport system permease family. CysTW subfamily.

It is found in the cell membrane. Functionally, part of the binding-protein-dependent transport system for phosphate; probably responsible for the translocation of the substrate across the membrane. This Methanocaldococcus jannaschii (strain ATCC 43067 / DSM 2661 / JAL-1 / JCM 10045 / NBRC 100440) (Methanococcus jannaschii) protein is Probable phosphate transport system permease protein PstC (pstC).